Here is a 480-residue protein sequence, read N- to C-terminus: Aspartyl/glutamyl-tRNA(Asn/Gln) amidotransferase subunit B (480 aa).

The protein belongs to the GatB/GatE family. GatB subfamily. Heterotrimer of A, B and C subunits.

It catalyses the reaction L-glutamyl-tRNA(Gln) + L-glutamine + ATP + H2O = L-glutaminyl-tRNA(Gln) + L-glutamate + ADP + phosphate + H(+). The catalysed reaction is L-aspartyl-tRNA(Asn) + L-glutamine + ATP + H2O = L-asparaginyl-tRNA(Asn) + L-glutamate + ADP + phosphate + 2 H(+). Functionally, allows the formation of correctly charged Asn-tRNA(Asn) or Gln-tRNA(Gln) through the transamidation of misacylated Asp-tRNA(Asn) or Glu-tRNA(Gln) in organisms which lack either or both of asparaginyl-tRNA or glutaminyl-tRNA synthetases. The reaction takes place in the presence of glutamine and ATP through an activated phospho-Asp-tRNA(Asn) or phospho-Glu-tRNA(Gln). This Saccharophagus degradans (strain 2-40 / ATCC 43961 / DSM 17024) protein is Aspartyl/glutamyl-tRNA(Asn/Gln) amidotransferase subunit B.